The chain runs to 398 residues: Serpin-Z1C (398 aa).

The RCL stretch occupies residues 343–367 (GTEAAASTAIKMALLQARPPSVMDF).

This sequence belongs to the serpin family.

Its function is as follows. Inhibits chymotrypsin and cathepsin G in vitro. This is Serpin-Z1C from Triticum aestivum (Wheat).